The following is a 212-amino-acid chain: Methylthioribulose-1-phosphate dehydratase (212 aa).

Zn(2+) contacts are provided by histidine 97 and histidine 99.

Belongs to the aldolase class II family. MtnB subfamily. In terms of assembly, homotetramer. It depends on Zn(2+) as a cofactor.

It carries out the reaction 5-(methylsulfanyl)-D-ribulose 1-phosphate = 5-methylsulfanyl-2,3-dioxopentyl phosphate + H2O. Its pathway is amino-acid biosynthesis; L-methionine biosynthesis via salvage pathway; L-methionine from S-methyl-5-thio-alpha-D-ribose 1-phosphate: step 2/6. Functionally, catalyzes the dehydration of methylthioribulose-1-phosphate (MTRu-1-P) into 2,3-diketo-5-methylthiopentyl-1-phosphate (DK-MTP-1-P). The protein is Methylthioribulose-1-phosphate dehydratase of Bacillus thuringiensis subsp. konkukian (strain 97-27).